The sequence spans 288 residues: ATP synthase gamma chain (288 aa).

It belongs to the ATPase gamma chain family. As to quaternary structure, F-type ATPases have 2 components, CF(1) - the catalytic core - and CF(0) - the membrane proton channel. CF(1) has five subunits: alpha(3), beta(3), gamma(1), delta(1), epsilon(1). CF(0) has three main subunits: a, b and c.

The protein resides in the cell inner membrane. Its function is as follows. Produces ATP from ADP in the presence of a proton gradient across the membrane. The gamma chain is believed to be important in regulating ATPase activity and the flow of protons through the CF(0) complex. This Haemophilus ducreyi (strain 35000HP / ATCC 700724) protein is ATP synthase gamma chain.